A 232-amino-acid chain; its full sequence is MGQKVHPNGIRLGIVKPWNATWFASSQEFADNLDGDFKVRQYLTKELKKASLSRIVIERPAKSIRVTIHTARPGVVIGKKGEDVEKLRAGVAKIAGVPAQINIAEVRKPELDGQLVADSIASQLERRVMFRRAMKRAVQNAMRLGAKGIKVEVSGRLGGAEIARSEWYREGRVPLHTLRADIDYATSSAHTQYGVIGVKVWIFKGEVLGGMPAANAVEPKADKPKKQRRSRK.

Positions 39–107 (VRQYLTKELK…PAQINIAEVR (69 aa)) constitute a KH type-2 domain.

It belongs to the universal ribosomal protein uS3 family. In terms of assembly, part of the 30S ribosomal subunit. Forms a tight complex with proteins S10 and S14.

Its function is as follows. Binds the lower part of the 30S subunit head. Binds mRNA in the 70S ribosome, positioning it for translation. This chain is Small ribosomal subunit protein uS3, found in Aliivibrio fischeri (strain MJ11) (Vibrio fischeri).